The chain runs to 143 residues: Hemoglobin subunit alpha-1 (143 aa).

Residue Ser2 is modified to N-acetylserine. In terms of domain architecture, Globin spans 2 to 143 (SLTEKDKAAV…VSLALAERYR (142 aa)). His60 is a binding site for O2. His89 is a heme b binding site.

It belongs to the globin family. As to quaternary structure, hb 1 is a heterotetramer of two alpha-1 and two beta chains. In terms of tissue distribution, red blood cells.

Involved in oxygen transport from gills to the various peripheral tissues. This Cottoperca gobio (Frogmouth) protein is Hemoglobin subunit alpha-1 (hba1).